Consider the following 144-residue polypeptide: D-aminoacyl-tRNA deacylase (144 aa).

Residues 136–137 (GP) carry the Gly-cisPro motif, important for rejection of L-amino acids motif.

The protein belongs to the DTD family. Homodimer.

The protein resides in the cytoplasm. The catalysed reaction is glycyl-tRNA(Ala) + H2O = tRNA(Ala) + glycine + H(+). The enzyme catalyses a D-aminoacyl-tRNA + H2O = a tRNA + a D-alpha-amino acid + H(+). An aminoacyl-tRNA editing enzyme that deacylates mischarged D-aminoacyl-tRNAs. Also deacylates mischarged glycyl-tRNA(Ala), protecting cells against glycine mischarging by AlaRS. Acts via tRNA-based rather than protein-based catalysis; rejects L-amino acids rather than detecting D-amino acids in the active site. By recycling D-aminoacyl-tRNA to D-amino acids and free tRNA molecules, this enzyme counteracts the toxicity associated with the formation of D-aminoacyl-tRNA entities in vivo and helps enforce protein L-homochirality. This chain is D-aminoacyl-tRNA deacylase, found in Actinobacillus pleuropneumoniae serotype 5b (strain L20).